Here is a 276-residue protein sequence, read N- to C-terminus: Dermonecrotic toxin LlSicTox-alphaIV1i (276 aa).

The active site involves H5. The Mg(2+) site is built by E25 and D27. H41 acts as the Nucleophile in catalysis. Disulfide bonds link C45/C51 and C47/C193. D85 contributes to the Mg(2+) binding site.

Belongs to the arthropod phospholipase D family. Class II subfamily. It depends on Mg(2+) as a cofactor. In terms of tissue distribution, expressed by the venom gland.

It localises to the secreted. The enzyme catalyses an N-(acyl)-sphingosylphosphocholine = an N-(acyl)-sphingosyl-1,3-cyclic phosphate + choline. It carries out the reaction an N-(acyl)-sphingosylphosphoethanolamine = an N-(acyl)-sphingosyl-1,3-cyclic phosphate + ethanolamine. The catalysed reaction is a 1-acyl-sn-glycero-3-phosphocholine = a 1-acyl-sn-glycero-2,3-cyclic phosphate + choline. It catalyses the reaction a 1-acyl-sn-glycero-3-phosphoethanolamine = a 1-acyl-sn-glycero-2,3-cyclic phosphate + ethanolamine. Dermonecrotic toxins cleave the phosphodiester linkage between the phosphate and headgroup of certain phospholipids (sphingolipid and lysolipid substrates), forming an alcohol (often choline) and a cyclic phosphate. This toxin acts on sphingomyelin (SM). It may also act on ceramide phosphoethanolamine (CPE), lysophosphatidylcholine (LPC) and lysophosphatidylethanolamine (LPE), but not on lysophosphatidylserine (LPS), and lysophosphatidylglycerol (LPG). It acts by transphosphatidylation, releasing exclusively cyclic phosphate products as second products. Induces dermonecrosis, hemolysis, increased vascular permeability, edema, inflammatory response, and platelet aggregation. The polypeptide is Dermonecrotic toxin LlSicTox-alphaIV1i (Loxosceles laeta (South American recluse spider)).